We begin with the raw amino-acid sequence, 451 residues long: Glutamyl-tRNA reductase (451 aa).

Substrate contacts are provided by residues 47 to 50, Ser132, 137 to 139, and Gln143; these read TCNR and EPQ. The active-site Nucleophile is the Cys48. 212–217 is a binding site for NADP(+); sequence AAGEMN.

This sequence belongs to the glutamyl-tRNA reductase family. As to quaternary structure, homodimer.

It carries out the reaction (S)-4-amino-5-oxopentanoate + tRNA(Glu) + NADP(+) = L-glutamyl-tRNA(Glu) + NADPH + H(+). The protein operates within porphyrin-containing compound metabolism; protoporphyrin-IX biosynthesis; 5-aminolevulinate from L-glutamyl-tRNA(Glu): step 1/2. Its function is as follows. Catalyzes the NADPH-dependent reduction of glutamyl-tRNA(Glu) to glutamate 1-semialdehyde (GSA). The polypeptide is Glutamyl-tRNA reductase (Psychrobacter sp. (strain PRwf-1)).